Consider the following 197-residue polypeptide: MWIIIASYGVLIIVLAIGIGVGVGVIRKVLKKGMKAEMTIGERMLCFGYYLLPVLECMTHCGPDVLNGWMKGLYKRSLGDLVVVYSTYPILGFMIFFMSYFLLVRGILQVRKKVRFHVSQALIIYLLTSIIGSLLNALPEMILMGWFGSTCLDILFILTMGSVIYASYQVWNGELTRLPLISEAAKLQVQDGEGEKK.

Helical transmembrane passes span 3 to 23 (IIIASYGVLIIVLAIGIGVGV), 47 to 66 (FGYYLLPVLECMTHCGPDVL), 81 to 101 (LVVVYSTYPILGFMIFFMSYF), 118 to 138 (VSQALIIYLLTSIIGSLLNAL), and 141 to 161 (MILMGWFGSTCLDILFILTMG).

This sequence belongs to the Tic20 family.

Its subcellular location is the plastid. The protein localises to the chloroplast membrane. The protein is Tic20 family protein Ycf60 (ycf60) of Cyanidioschyzon merolae (strain NIES-3377 / 10D) (Unicellular red alga).